The following is a 301-amino-acid chain: Fructokinase (301 aa).

Residues His-165, Cys-181, His-184, and Cys-187 each contribute to the Zn(2+) site.

The protein belongs to the ROK (NagC/XylR) family. Mg(2+) is required as a cofactor.

The catalysed reaction is D-fructose + ATP = D-fructose 6-phosphate + ADP + H(+). With respect to regulation, inhibition by zinc ions. The sequence is that of Fructokinase (frk) from Zymomonas mobilis subsp. mobilis (strain ATCC 31821 / ZM4 / CP4).